Reading from the N-terminus, the 295-residue chain is UDP-N-acetylenolpyruvoylglucosamine reductase (295 aa).

Residues 23–188 (KVGGPADFLA…ISAKFALKPG (166 aa)) enclose the FAD-binding PCMH-type domain. Arginine 167 is an active-site residue. Catalysis depends on serine 217, which acts as the Proton donor. Glutamate 287 is an active-site residue.

It belongs to the MurB family. FAD is required as a cofactor.

Its subcellular location is the cytoplasm. The enzyme catalyses UDP-N-acetyl-alpha-D-muramate + NADP(+) = UDP-N-acetyl-3-O-(1-carboxyvinyl)-alpha-D-glucosamine + NADPH + H(+). The protein operates within cell wall biogenesis; peptidoglycan biosynthesis. Functionally, cell wall formation. The polypeptide is UDP-N-acetylenolpyruvoylglucosamine reductase (Streptococcus pyogenes serotype M12 (strain MGAS9429)).